The chain runs to 348 residues: Heat-inducible transcription repressor HrcA (348 aa).

This sequence belongs to the HrcA family.

In terms of biological role, negative regulator of class I heat shock genes (grpE-dnaK-dnaJ and groELS operons). Prevents heat-shock induction of these operons. This chain is Heat-inducible transcription repressor HrcA, found in Thermodesulfovibrio yellowstonii (strain ATCC 51303 / DSM 11347 / YP87).